A 343-amino-acid polypeptide reads, in one-letter code: Pseudaminic acid synthase (343 aa).

An AFP-like domain is found at 287–343 (SLYASKDIKKGEMFSEENVKSVRPSFGLHPKFYQELLGKKASKDIKFGDALKQGDFQ).

This sequence belongs to the pseudaminic acid synthase family. The cofactor is a divalent metal cation.

It catalyses the reaction 2,4-diacetamido-2,4,6-trideoxy-beta-L-altrose + phosphoenolpyruvate + H2O = pseudaminate + phosphate. Functionally, catalyzes the fifth step in the biosynthesis of pseudaminic acid, a sialic-acid-like sugar that is used to modify flagellin. Catalyzes the condensation of phosphoenolpyruvate with 2,4-diacetamido-2,4,6-trideoxy-beta-l-altropyranose, forming pseudaminic acid. In Campylobacter jejuni subsp. jejuni serotype O:2 (strain ATCC 700819 / NCTC 11168), this protein is Pseudaminic acid synthase (pseI).